The primary structure comprises 445 residues: UPF0210 protein STER_0157 (445 aa).

Belongs to the UPF0210 family. In terms of assembly, homodimer.

The polypeptide is UPF0210 protein STER_0157 (Streptococcus thermophilus (strain ATCC BAA-491 / LMD-9)).